We begin with the raw amino-acid sequence, 748 residues long: Acyl-coenzyme A oxidase (748 aa).

Belongs to the acyl-CoA oxidase family. As to quaternary structure, homooctamer. It depends on FAD as a cofactor.

The protein localises to the peroxisome. The catalysed reaction is a 2,3-saturated acyl-CoA + O2 = a (2E)-enoyl-CoA + H2O2. It participates in lipid metabolism; peroxisomal fatty acid beta-oxidation. The sequence is that of Acyl-coenzyme A oxidase (POX1) from Saccharomyces cerevisiae (strain ATCC 204508 / S288c) (Baker's yeast).